An 89-amino-acid chain; its full sequence is Small ribosomal subunit protein uS15 (89 aa).

The protein belongs to the universal ribosomal protein uS15 family. In terms of assembly, part of the 30S ribosomal subunit. Forms a bridge to the 50S subunit in the 70S ribosome, contacting the 23S rRNA.

Functionally, one of the primary rRNA binding proteins, it binds directly to 16S rRNA where it helps nucleate assembly of the platform of the 30S subunit by binding and bridging several RNA helices of the 16S rRNA. Forms an intersubunit bridge (bridge B4) with the 23S rRNA of the 50S subunit in the ribosome. The chain is Small ribosomal subunit protein uS15 from Proteus mirabilis (strain HI4320).